A 400-amino-acid chain; its full sequence is Tryptophan synthase beta chain (400 aa).

The residue at position 90 (K90) is an N6-(pyridoxal phosphate)lysine.

It belongs to the TrpB family. In terms of assembly, tetramer of two alpha and two beta chains. It depends on pyridoxal 5'-phosphate as a cofactor.

It catalyses the reaction (1S,2R)-1-C-(indol-3-yl)glycerol 3-phosphate + L-serine = D-glyceraldehyde 3-phosphate + L-tryptophan + H2O. It functions in the pathway amino-acid biosynthesis; L-tryptophan biosynthesis; L-tryptophan from chorismate: step 5/5. In terms of biological role, the beta subunit is responsible for the synthesis of L-tryptophan from indole and L-serine. This is Tryptophan synthase beta chain from Bacillus velezensis (strain DSM 23117 / BGSC 10A6 / LMG 26770 / FZB42) (Bacillus amyloliquefaciens subsp. plantarum).